The following is a 118-amino-acid chain: Probable dihydroneopterin aldolase (118 aa).

Substrate-binding positions include Glu21, Tyr53, and 72-73; that span reads IE. Catalysis depends on Lys98, which acts as the Proton donor/acceptor.

The protein belongs to the DHNA family.

It catalyses the reaction 7,8-dihydroneopterin = 6-hydroxymethyl-7,8-dihydropterin + glycolaldehyde. The protein operates within cofactor biosynthesis; tetrahydrofolate biosynthesis; 2-amino-4-hydroxy-6-hydroxymethyl-7,8-dihydropteridine diphosphate from 7,8-dihydroneopterin triphosphate: step 3/4. Functionally, catalyzes the conversion of 7,8-dihydroneopterin to 6-hydroxymethyl-7,8-dihydropterin. The chain is Probable dihydroneopterin aldolase (folB) from Synechocystis sp. (strain ATCC 27184 / PCC 6803 / Kazusa).